Here is a 355-residue protein sequence, read N- to C-terminus: F-box only protein 32 (355 aa).

The Nuclear localization signal motif lies at lysine 62–aspartate 67. The Nuclear export signal signature appears at leucine 169–leucine 173. The F-box domain maps to leucine 223–glutamine 271. The Bipartite nuclear localization signal motif lies at arginine 280 to lysine 295.

In terms of assembly, part of the SCF (SKP1-CUL1-F-box) E3 ubiquitin-protein ligase complex SCF(FBXO32) formed of CUL1, SKP1, RBX1 and FBXO32. Specifically expressed in cardiac and skeletal muscle.

It is found in the cytoplasm. It localises to the nucleus. The protein operates within protein modification; protein ubiquitination. Its function is as follows. Substrate recognition component of a SCF (SKP1-CUL1-F-box protein) E3 ubiquitin-protein ligase complex which mediates the ubiquitination and subsequent proteasomal degradation of target proteins. Probably recognizes and binds to phosphorylated target proteins during skeletal muscle atrophy. Recognizes TERF1. This chain is F-box only protein 32 (FBXO32), found in Homo sapiens (Human).